The chain runs to 287 residues: Phosphatidylserine decarboxylase proenzyme (287 aa).

Catalysis depends on charge relay system; for autoendoproteolytic cleavage activity residues Asp90, His147, and Ser252. Ser252 functions as the Schiff-base intermediate with substrate; via pyruvic acid; for decarboxylase activity in the catalytic mechanism. A Pyruvic acid (Ser); by autocatalysis modification is found at Ser252.

The protein belongs to the phosphatidylserine decarboxylase family. PSD-B subfamily. Prokaryotic type I sub-subfamily. Heterodimer of a large membrane-associated beta subunit and a small pyruvoyl-containing alpha subunit. Pyruvate is required as a cofactor. In terms of processing, is synthesized initially as an inactive proenzyme. Formation of the active enzyme involves a self-maturation process in which the active site pyruvoyl group is generated from an internal serine residue via an autocatalytic post-translational modification. Two non-identical subunits are generated from the proenzyme in this reaction, and the pyruvate is formed at the N-terminus of the alpha chain, which is derived from the carboxyl end of the proenzyme. The autoendoproteolytic cleavage occurs by a canonical serine protease mechanism, in which the side chain hydroxyl group of the serine supplies its oxygen atom to form the C-terminus of the beta chain, while the remainder of the serine residue undergoes an oxidative deamination to produce ammonia and the pyruvoyl prosthetic group on the alpha chain. During this reaction, the Ser that is part of the protease active site of the proenzyme becomes the pyruvoyl prosthetic group, which constitutes an essential element of the active site of the mature decarboxylase.

The protein localises to the cell membrane. The enzyme catalyses a 1,2-diacyl-sn-glycero-3-phospho-L-serine + H(+) = a 1,2-diacyl-sn-glycero-3-phosphoethanolamine + CO2. It functions in the pathway phospholipid metabolism; phosphatidylethanolamine biosynthesis; phosphatidylethanolamine from CDP-diacylglycerol: step 2/2. Its function is as follows. Catalyzes the formation of phosphatidylethanolamine (PtdEtn) from phosphatidylserine (PtdSer). This chain is Phosphatidylserine decarboxylase proenzyme, found in Pseudomonas putida (strain W619).